The following is a 130-amino-acid chain: Fumarate reductase subunit C (130 aa).

The next 3 membrane-spanning stretches (helical) occupy residues 30 to 50, 60 to 80, and 110 to 130; these read EGTS…VFAL, FVSF…LFAA, and IKAL…VALL.

This sequence belongs to the FrdC family. Part of an enzyme complex containing four subunits: a flavoprotein (FrdA), an iron-sulfur protein (FrdB), and two hydrophobic anchor proteins (FrdC and FrdD).

It is found in the cell inner membrane. Two distinct, membrane-bound, FAD-containing enzymes are responsible for the catalysis of fumarate and succinate interconversion; fumarate reductase is used in anaerobic growth, and succinate dehydrogenase is used in aerobic growth. Anchors the catalytic components of the fumarate reductase complex to the cell inner membrane, binds quinones. This is Fumarate reductase subunit C from Yersinia pseudotuberculosis serotype O:1b (strain IP 31758).